A 92-amino-acid chain; its full sequence is LYR motif-containing protein 4 homolog (92 aa).

The stretch at 40–68 (ANKAIRDFAEIDRQMEAGKQNLELIRRQV) forms a coiled coil.

It belongs to the complex I LYR family. As to quaternary structure, component of the mitochondrial core iron-sulfur cluster (ISC) assembly complex at least composed of the cysteine desulfurase Nfs1, the scaffold protein IscU, the accessory protein bcn92/Isd11/Lyrm4, and probably fh/frataxin. Interacts with Nfs1.

It localises to the mitochondrion. Its function is as follows. Stabilizing factor of the core iron-sulfur cluster (ISC) assembly complex that regulates the stability and cysteine desulfurase activity of Nfs1 and participates in the [2Fe-2S] clusters assembly on the scaffolding protein IscU. This Drosophila subobscura (Fruit fly) protein is LYR motif-containing protein 4 homolog.